A 183-amino-acid polypeptide reads, in one-letter code: Ribosome maturation factor RimP (183 aa).

The protein belongs to the RimP family.

The protein localises to the cytoplasm. Functionally, required for maturation of 30S ribosomal subunits. The chain is Ribosome maturation factor RimP from Mycobacterium bovis (strain ATCC BAA-935 / AF2122/97).